The chain runs to 198 residues: MPEQSNDYRVVVFGAGGVGKSSLVLRFVKGTFRDTYIPTIEDTYRQVISCDKSVCTLQITDTTGSHQFPAMQRLSISKGHAFILVFSVTSKQSLEELGPIYKLIVQIKGSVEDIPVMLVGNKCDETQREVDTREAQAVAQEWKCAFMETSAKMNYNVKELFQELLTLETRRNMSLNIDGKRSGKQKRTDRVKGKCTLM.

GTP is bound by residues 17 to 22 (GVGKSS), 33 to 39 (RDTYIPT), 61 to 65 (DTTGS), 121 to 125 (NKCDE), A151, and 151 to 152 (AK). Positions 36–44 (YIPTIEDTY) match the Effector region motif. Residues 178-192 (DGKRSGKQKRTDRVK) show a composition bias toward basic and acidic residues. The tract at residues 178 to 198 (DGKRSGKQKRTDRVKGKCTLM) is disordered. C195 is subject to Cysteine methyl ester. C195 carries the S-geranylgeranyl cysteine lipid modification. A propeptide spans 196–198 (TLM) (removed in mature form).

Belongs to the small GTPase superfamily. Di-Ras family. Highly expressed in heart and brain.

The protein resides in the cell membrane. In terms of biological role, displays low GTPase activity and exists predominantly in the GTP-bound form. The protein is GTP-binding protein Di-Ras1 (DIRAS1) of Homo sapiens (Human).